A 349-amino-acid polypeptide reads, in one-letter code: DNA-directed RNA polymerase subunit alpha (349 aa).

Positions 1–226 (MLIAQRPTLV…GLFGLAQELN (226 aa)) are alpha N-terminal domain (alpha-NTD). The tract at residues 241–349 (AALAADLALP…GAEFVETEQY (109 aa)) is alpha C-terminal domain (alpha-CTD). Positions 308-349 (LKDSPPGFDPRQAVDTYGTDSYNPAFSDPSDDGAEFVETEQY) are disordered. The span at 336–349 (PSDDGAEFVETEQY) shows a compositional bias: acidic residues.

It belongs to the RNA polymerase alpha chain family. As to quaternary structure, homodimer. The RNAP catalytic core consists of 2 alpha, 1 beta, 1 beta' and 1 omega subunit. When a sigma factor is associated with the core the holoenzyme is formed, which can initiate transcription.

The enzyme catalyses RNA(n) + a ribonucleoside 5'-triphosphate = RNA(n+1) + diphosphate. Its function is as follows. DNA-dependent RNA polymerase catalyzes the transcription of DNA into RNA using the four ribonucleoside triphosphates as substrates. This Frankia alni (strain DSM 45986 / CECT 9034 / ACN14a) protein is DNA-directed RNA polymerase subunit alpha.